The following is a 306-amino-acid chain: MERSLKKTKNNYNNSIKSNLMKDDELFHVIHKVPCGDTPYVRAKHAQLIEKNPEMAIVWFWKAINTGDRVDSALKDMAVVMKQLDRSEEAIEAIKSFRPRCSKNSQDSLDNVLIDLYKKCGRMEEQVELLKRKLRQIYQGEAFNGKPTKTARSHGKKFQVTVQQEISRLLGNLGWAYMQQAKYLSAEAVYRKAQMVEPDANKSCNLAMCLIKQGRFEEGRLVLDDVLEYRVLGADDCRTRQRAEELLSELESSLPRMRDAEMEDVLGNILDDDFVLGLEEMTSTSFKSKRLPIFEQISSFRNTLVC.

TPR repeat units lie at residues methionine 1–lysine 22, aspartate 71–asparagine 104, aspartate 107–glycine 140, serine 167–alanine 200, and lysine 202–glycine 233. The stretch at serine 72–glutamine 139 forms a coiled coil. The stretch at arginine 238–alanine 260 forms a coiled coil. The TPR 6 repeat unit spans residues leucine 270 to leucine 304.

It belongs to the MS5 protein family.

The protein resides in the nucleus. Its function is as follows. Involved in the utilization of stored sulfate under sulfur-deficient conditions. The sequence is that of Protein SULFUR DEFICIENCY-INDUCED 1 from Arabidopsis thaliana (Mouse-ear cress).